The chain runs to 529 residues: Biotin-dependent 3-methylcrotonyl-coenzyme A carboxylase beta1 subunit (529 aa).

In terms of domain architecture, CoA carboxyltransferase N-terminal spans 16–272 (HRRLVAELNN…CEPAQWDVRR (257 aa)). In terms of domain architecture, CoA carboxyltransferase C-terminal spans 275–521 (EPKYPQAELY…SLCAHAPLDQ (247 aa)).

Belongs to the AccD/PCCB family. In terms of assembly, the biotin-dependent acyl-CoA carboxylase complex is composed of AccA1, which contains the biotin carboxylase (BC) and biotin carboxyl carrier protein (BCCP) domains, and AccD1, which contains the carboxyl transferase (CT) domain. The AccA1/AccD1 complex forms a dodecamer.

The catalysed reaction is 3-methylbut-2-enoyl-CoA + N(6)-carboxybiotinyl-L-lysyl-[protein] = 3-methyl-(2E)-glutaconyl-CoA + N(6)-biotinyl-L-lysyl-[protein]. The protein operates within amino-acid degradation; L-leucine degradation. Component of a biotin-dependent acyl-CoA carboxylase complex. This subunit transfers the CO2 from carboxybiotin to the CoA ester substrate. When associated with the alpha1 subunit AccA1, is involved in branched amino-acid catabolism with methylcrotonyl coenzyme A as the substrate. Shows residual with propionyl-CoA and acetyl-CoA. The polypeptide is Biotin-dependent 3-methylcrotonyl-coenzyme A carboxylase beta1 subunit (Mycobacterium tuberculosis (strain ATCC 25618 / H37Rv)).